The sequence spans 398 residues: 8-amino-7-oxononanoate synthase (398 aa).

2 residues coordinate substrate: R22 and R29. A pyridoxal 5'-phosphate-binding site is contributed by 109–110 (GW). Position 141 (H141) interacts with substrate. Residues S189, 214-217 (DEAH), and 242-245 (TFSK) contribute to the pyridoxal 5'-phosphate site. At K245 the chain carries N6-(pyridoxal phosphate)lysine. A substrate-binding site is contributed by T359.

The protein belongs to the class-II pyridoxal-phosphate-dependent aminotransferase family. BioF subfamily. Homodimer. Pyridoxal 5'-phosphate is required as a cofactor.

It carries out the reaction 6-carboxyhexanoyl-[ACP] + L-alanine + H(+) = (8S)-8-amino-7-oxononanoate + holo-[ACP] + CO2. It functions in the pathway cofactor biosynthesis; biotin biosynthesis. Functionally, catalyzes the decarboxylative condensation of pimeloyl-[acyl-carrier protein] and L-alanine to produce 8-amino-7-oxononanoate (AON), [acyl-carrier protein], and carbon dioxide. The chain is 8-amino-7-oxononanoate synthase from Gluconacetobacter diazotrophicus (strain ATCC 49037 / DSM 5601 / CCUG 37298 / CIP 103539 / LMG 7603 / PAl5).